Reading from the N-terminus, the 174-residue chain is UPF0200 protein PAE1629 (174 aa).

Position 9-16 (9-16 (GLPGSGKT)) interacts with ATP.

This sequence belongs to the UPF0200 family.

The chain is UPF0200 protein PAE1629 from Pyrobaculum aerophilum (strain ATCC 51768 / DSM 7523 / JCM 9630 / CIP 104966 / NBRC 100827 / IM2).